Consider the following 119-residue polypeptide: Beta-2-microglobulin (119 aa).

The signal sequence occupies residues 1 to 20 (MARSVVAALLVLLSLSGLEA). One can recognise an Ig-like C1-type domain in the interval 25–114 (PKIQVYSRHP…VTFPTPKTVK (90 aa)). The cysteines at positions 45 and 100 are disulfide-linked.

Belongs to the beta-2-microglobulin family. In terms of assembly, heterodimer of an alpha chain and a beta chain. Beta-2-microglobulin is the beta-chain of major histocompatibility complex class I molecules.

Its subcellular location is the secreted. Component of the class I major histocompatibility complex (MHC). Involved in the presentation of peptide antigens to the immune system. This Saimiri boliviensis boliviensis (Bolivian squirrel monkey) protein is Beta-2-microglobulin (B2M).